We begin with the raw amino-acid sequence, 950 residues long: Glycine dehydrogenase (decarboxylating) (950 aa).

An N6-(pyridoxal phosphate)lysine modification is found at Lys699.

The protein belongs to the GcvP family. In terms of assembly, the glycine cleavage system is composed of four proteins: P, T, L and H. Pyridoxal 5'-phosphate is required as a cofactor.

It carries out the reaction N(6)-[(R)-lipoyl]-L-lysyl-[glycine-cleavage complex H protein] + glycine + H(+) = N(6)-[(R)-S(8)-aminomethyldihydrolipoyl]-L-lysyl-[glycine-cleavage complex H protein] + CO2. In terms of biological role, the glycine cleavage system catalyzes the degradation of glycine. The P protein binds the alpha-amino group of glycine through its pyridoxal phosphate cofactor; CO(2) is released and the remaining methylamine moiety is then transferred to the lipoamide cofactor of the H protein. This Chromobacterium violaceum (strain ATCC 12472 / DSM 30191 / JCM 1249 / CCUG 213 / NBRC 12614 / NCIMB 9131 / NCTC 9757 / MK) protein is Glycine dehydrogenase (decarboxylating).